We begin with the raw amino-acid sequence, 597 residues long: MGIHAKLETVQLPLLVSCLFPPLTMPAKDVQICPIAVDTTVFRSRTWDRLKFEIEYGLQRGTTANSYLISADKIALFDPPGESFTDNFVGTLIQRLDLNSLDYVILGHVNANRAHTLKLLLSLAPQATIICSNPAAQNLEKLLADAEVNNPIQVMKGNDHLDLGRGHELTFIPTPSPRYPGQLCTYDPRTEILFTDKLFGAHVCGDQVFDEGWTIYQEDRRYYFDCLLAPAAAQVSAALNKLEAYPAQTYAPSHGPLVRYGLRELTRNYQQWLSEQQAQALNVALIYASAYGNTSTLAQAIARGITKAGVAVTAINAETSNAEEIKEAIGKSAGFIFGSPTLGGHAPTPIQTALGITLANASKTQLCGVFGSFGWSGEAIDMLENKFRDAGFSFGFDTIRVKFKPTDQTLKMCEEAGTDFAQALKKAEKRRQPKSALPESESARTEQALGRLVGSLCVVTAQQGELSSAMLASWVSQATFSPPGLTVAVAKERAIESLLHKNSCFVLNILQEGNHLGLMKHFLKPFAPGGDRFADVATETAENGAPILTESLAYLECRVQQRLECGDHWVLYAVTDRGALLKDGVTAVHHRKSGDHY.

A zinc metallo-hydrolase region spans residues 59-254 (QRGTTANSYL…YPAQTYAPSH (196 aa)). Residues 283-421 (VALIYASAYG…MCEEAGTDFA (139 aa)) enclose the Flavodoxin-like domain. A flavodoxin-reductase-like region spans residues 449–597 (LGRLVGSLCV…VHHRKSGDHY (149 aa)).

It in the N-terminal section; belongs to the zinc metallo-hydrolase group 3 family. In the C-terminal section; belongs to the flavodoxin reductase family. The cofactor is Fe cation.

In terms of biological role, mediates electron transfer from NADH to oxygen, reducing it to water. This modular protein has 3 redox cofactors, in other organisms the same activity requires 2 or 3 proteins. The chain is Putative diflavin flavoprotein A 3 (dfa3) from Synechocystis sp. (strain ATCC 27184 / PCC 6803 / Kazusa).